An 87-amino-acid chain; its full sequence is Phosphoribosyl-ATP pyrophosphatase (87 aa).

The protein belongs to the PRA-PH family.

The protein localises to the cytoplasm. It carries out the reaction 1-(5-phospho-beta-D-ribosyl)-ATP + H2O = 1-(5-phospho-beta-D-ribosyl)-5'-AMP + diphosphate + H(+). The protein operates within amino-acid biosynthesis; L-histidine biosynthesis; L-histidine from 5-phospho-alpha-D-ribose 1-diphosphate: step 2/9. The chain is Phosphoribosyl-ATP pyrophosphatase from Bifidobacterium longum (strain DJO10A).